Reading from the N-terminus, the 209-residue chain is Probable GTP-binding protein EngB (209 aa).

Residues 12–203 (VSFEIIFVGR…RDRLHEMKRD (192 aa)) form the EngB-type G domain. GTP is bound by residues 20-27 (GRSNVGKS), 45-49 (GVTLR), 62-65 (DMPG), 142-145 (NKMD), and 179-181 (ISA). Residues S27 and T47 each coordinate Mg(2+).

Belongs to the TRAFAC class TrmE-Era-EngA-EngB-Septin-like GTPase superfamily. EngB GTPase family. The cofactor is Mg(2+).

Necessary for normal cell division and for the maintenance of normal septation. The polypeptide is Probable GTP-binding protein EngB (Methanosarcina barkeri (strain Fusaro / DSM 804)).